Consider the following 202-residue polypeptide: Ribosomal RNA small subunit methyltransferase G (202 aa).

S-adenosyl-L-methionine is bound by residues G75, F80, 125–126, and R139; that span reads VQ.

Belongs to the methyltransferase superfamily. RNA methyltransferase RsmG family.

It localises to the cytoplasm. Functionally, specifically methylates the N7 position of a guanine in 16S rRNA. The chain is Ribosomal RNA small subunit methyltransferase G from Mesomycoplasma hyopneumoniae (strain 7448) (Mycoplasma hyopneumoniae).